We begin with the raw amino-acid sequence, 327 residues long: Small ribosomal subunit protein uS2 (327 aa).

A disordered region spans residues 258 to 327; that stretch reads AGHTPVSETL…PGVADGAALE (70 aa).

The protein belongs to the universal ribosomal protein uS2 family.

The polypeptide is Small ribosomal subunit protein uS2 (Anaplasma marginale (strain St. Maries)).